Here is a 224-residue protein sequence, read N- to C-terminus: Non-structural protein V (224 aa).

Residues 55-65 show a composition bias toward polar residues; sequence KNIQYPTTSHQ. Disordered regions lie at residues 55-90 and 145-172; these read KNIQ…GTGG and TSTP…GHRR. Residues His170, Cys189, Cys193, Cys205, Cys207, Cys210, Cys214, and Cys217 each coordinate Zn(2+).

The protein belongs to the paramyxoviruses V protein family. In terms of assembly, interacts with host IFIH1/MDA5 and DHX58/LGP2. Forms with host DDB1, CUL4A, STAT1, STAT2 and STAT3 the mumps virus V-dependent complex (VDC).

Its subcellular location is the virion. The protein localises to the host cytoplasm. Its function is as follows. Plays an essential role in the inhibition of host immune response. Prevents the establishment of cellular antiviral state by blocking interferon-alpha/beta (IFN-alpha/beta) production and signaling pathway. Interacts with host IFIH1/MDA5 and DHX58/LGP2 to inhibit the transduction pathway involved in the activation of IFN-beta promoter, thus protecting the virus against cell antiviral state. Blocks the type I and II interferon signaling pathways by interacting with host STAT1, STAT2 and STAT3, and mediating their ubiquitination and subsequent proteasomal degradation. The polypeptide is Non-structural protein V (Mumps virus genotype B (strain Miyahara vaccine) (MuV)).